The following is a 151-amino-acid chain: Arginine regulator (151 aa).

Belongs to the ArgR family.

It localises to the cytoplasm. It participates in amino-acid degradation; L-arginine degradation via ADI pathway. Functionally, regulates the transcription of the arc operon, involved in arginine catabolism. This is Arginine regulator (argR1) from Clostridium perfringens (strain 13 / Type A).